The chain runs to 397 residues: S-adenosylmethionine synthase (397 aa).

Histidine 16 contributes to the ATP binding site. Aspartate 18 lines the Mg(2+) pocket. Glutamate 44 is a binding site for K(+). L-methionine contacts are provided by glutamate 57 and glutamine 100. The tract at residues 100–110 (QSPDIAQGVNE) is flexible loop. ATP contacts are provided by residues 175 to 177 (DAK), 242 to 243 (RF), aspartate 251, 257 to 258 (RK), alanine 274, and lysine 278. Aspartate 251 is an L-methionine binding site. Lysine 282 is an L-methionine binding site.

This sequence belongs to the AdoMet synthase family. In terms of assembly, homotetramer; dimer of dimers. Mg(2+) serves as cofactor. K(+) is required as a cofactor.

Its subcellular location is the cytoplasm. The catalysed reaction is L-methionine + ATP + H2O = S-adenosyl-L-methionine + phosphate + diphosphate. It participates in amino-acid biosynthesis; S-adenosyl-L-methionine biosynthesis; S-adenosyl-L-methionine from L-methionine: step 1/1. Functionally, catalyzes the formation of S-adenosylmethionine (AdoMet) from methionine and ATP. The overall synthetic reaction is composed of two sequential steps, AdoMet formation and the subsequent tripolyphosphate hydrolysis which occurs prior to release of AdoMet from the enzyme. This is S-adenosylmethionine synthase from Streptococcus thermophilus (strain CNRZ 1066).